We begin with the raw amino-acid sequence, 421 residues long: Core-capsid bridging protein (421 aa).

Belongs to the adenoviridae core-capsid bridging protein family. In terms of assembly, monomer. Homodimer. Exists in equilibrium between monomers and dimers in solution. Interacts with the histone-like nucleoprotein; this interactions bridge the virus core to the capsid. Interacts with core protein X; this interactions bridge the virus core to the capsid. Interacts with the endosome lysis protein VI; this interactions bridge the virus core to the capsid. Interacts with the peripentonal hexons. Interacts with host NPM1; this interaction might play a role in virus assembly.

It localises to the virion. The protein localises to the host nucleus. It is found in the host nucleolus. Associates loosely with the viral DNA to form an outer shell around the nucleoprotein-DNA complex and links it with the capsid by binding the endosome lysis protein. Dissociates from the viral genome during entry. Might be involved in nuclear capsid assembly of the viral particles through its association with NPM1/nucleophosmin. This Canine adenovirus serotype 1 (strain CLL) (CAdV-1) protein is Core-capsid bridging protein.